The sequence spans 200 residues: 3-isopropylmalate dehydratase small subunit (200 aa).

Belongs to the LeuD family. LeuD type 1 subfamily. As to quaternary structure, heterodimer of LeuC and LeuD.

The catalysed reaction is (2R,3S)-3-isopropylmalate = (2S)-2-isopropylmalate. The protein operates within amino-acid biosynthesis; L-leucine biosynthesis; L-leucine from 3-methyl-2-oxobutanoate: step 2/4. Its function is as follows. Catalyzes the isomerization between 2-isopropylmalate and 3-isopropylmalate, via the formation of 2-isopropylmaleate. The polypeptide is 3-isopropylmalate dehydratase small subunit (Vibrio atlanticus (strain LGP32) (Vibrio splendidus (strain Mel32))).